Here is a 755-residue protein sequence, read N- to C-terminus: MGPTACVLVLALAILRATGQGQIPLGGDLAPQMLRELQETNAALQDVRELLRQQVKEITFLKNTVMECDACGMQPARTPGLSVRPVPLCAPGSCFPGVVCSETATGARCGPCPPGYTGNGSHCTDVNECNAHPCFPRVRCINTSPGFHCEACPPGFSGPTHEGVGLTFAKSNKQVCTDINECETGQHNCVPNSVCVNTRGSFQCGPCQPGFVGDQTSGCQRRGQHFCPDGSPSPCHEKANCVLERDGSRSCVCAVGWAGNGLLCGRDTDLDGFPDEKLRCSERQCRKDNCVTVPNSGQEDVDRDGIGDACDPDADGDGVPNEQDNCPLVRNPDQRNSDSDKWGDACDNCRSKKNDDQKDTDLDGRGDACDDDIDGDRIRNVADNCPRVPNFDQSDSDGDGVGDACDNCPQKDNPDQRDVDHDFVGDACDSDQDQDGDGHQDSRDNCPTVPNSAQQDSDHDGKGDACDDDDDNDGVPDSRDNCRLVPNPGQEDNDRDGVGDACQGDFDADKVIDKIDVCPENAEVTLTDFRAFQTVVLDPEGDAQIDPNWVVLNQGMEIVQTMNSDPGLAVGYTAFNGVDFEGTFHVNTATDDDYAGFIFGYQDSSSFYVVMWKQMEQTYWQANPFRAVAEPGIQLKAVKSSTGPGEQLRNALWHTGDTASQVRLLWKDPRNVGWKDKTSYRWFLQHRPQVGYIRVRFYEGPELVADSNVVLDTAMRGGRLGVFCFSQENIIWANLRYRCNDTIPEDYESHRLQRV.

The first 19 residues, 1–19 (MGPTACVLVLALAILRATG), serve as a signal peptide directing secretion. Positions 21 to 84 (GQIPLGGDLA…PARTPGLSVR (64 aa)) are COMP N-terminal. The region spanning 85–124 (PVPLCAPGSCFPGVVCSETATGARCGPCPPGYTGNGSHCT) is the EGF-like 1 domain. 21 disulfide bridges follow: cysteine 89/cysteine 100, cysteine 94/cysteine 109, cysteine 112/cysteine 123, cysteine 129/cysteine 140, cysteine 134/cysteine 149, cysteine 152/cysteine 176, cysteine 182/cysteine 195, cysteine 189/cysteine 204, cysteine 207/cysteine 219, cysteine 227/cysteine 241, cysteine 235/cysteine 251, cysteine 253/cysteine 264, cysteine 280/cysteine 285, cysteine 290/cysteine 310, cysteine 326/cysteine 346, cysteine 349/cysteine 369, cysteine 385/cysteine 405, cysteine 408/cysteine 428, cysteine 446/cysteine 466, cysteine 482/cysteine 502, and cysteine 518/cysteine 739. An N-linked (GlcNAc...) asparagine glycan is attached at asparagine 119. Residues 125-177 (DVNECNAHPCFPRVRCINTSPGFHCEACPPGFSGPTHEGVGLTFAKSNKQVCT) enclose the EGF-like 2; calcium-binding domain. Positions 178–220 (DINECETGQHNCVPNSVCVNTRGSFQCGPCQPGFVGDQTSGCQ) constitute an EGF-like 3; calcium-binding domain. The 43-residue stretch at 223–265 (GQHFCPDGSPSPCHEKANCVLERDGSRSCVCAVGWAGNGLLCG) folds into the EGF-like 4 domain. TSP type-3 repeat units follow at residues 266-298 (RDTD…NSGQ), 299-334 (EDVD…NPDQ), 335-357 (RNSD…NDDQ), 358-393 (KDTD…NFDQ), 394-416 (SDSD…NPDQ), 417-454 (RDVD…NSAQ), 455-490 (QDSD…NPGQ), and 491-526 (EDND…EVTL). 2 disordered regions span residues 296–341 (SGQE…DSDK) and 353–501 (KNDD…VGDA). 2 stretches are compositionally biased toward basic and acidic residues: residues 332 to 341 (PDQRNSDSDK) and 353 to 368 (KNDD…RGDA). Phosphoserine is present on serine 394. Composition is skewed to basic and acidic residues over residues 412–424 (DNPD…HDFV) and 456–465 (DSDHDGKGDA). The mediates cell survival and induction of the IAP family of survival proteins stretch occupies residues 525–755 (TLTDFRAFQT…DYESHRLQRV (231 aa)). Residues 530–744 (RAFQTVVLDP…LRYRCNDTIP (215 aa)) enclose the TSP C-terminal domain. A glycan (N-linked (GlcNAc...) asparagine) is linked at asparagine 740.

Belongs to the thrombospondin family. Pentamer; disulfide-linked. Exists in a more compact conformation in the presence of calcium and shows a more extended conformation in the absence of calcium. Interacts with ITGB3, ITGA5 and FN1. Binding to FN1 requires the presence of divalent cations (Ca(2+), Mg(2+) or Mn(2+)). The greatest amount of binding is seen in the presence of Mn(2+). Interacts with MATN1, MATN3, MATN4 and ACAN. Binds heparin, heparan sulfate and chondroitin sulfate. EDTA dimishes significantly its binding to ACAN and abolishes its binding to MATN3, MATN4 and chondroitin sulfate. Interacts with collagen I, II and IX, and interaction with these collagens is dependent on the presence of zinc ions. Interacts with ADAMTS12. Interacts with ITGA7. Ca(2+) is required as a cofactor. In terms of processing, proteolytically cleaved by metalloproteases ADAMTS4 and ADAMTS1 with ADAMTS4 showing more potent activity. In terms of tissue distribution, expressed in cartilage, including nasal, knee epiphyseal and rib tissues. Abundantly expressed in chondrocyte and tendon extracellular matrix (at protein level).

Its subcellular location is the secreted. The protein resides in the extracellular space. It is found in the extracellular matrix. In terms of biological role, plays a role in the structural integrity of cartilage via its interaction with other extracellular matrix proteins such as the collagens and fibronectin. Can mediate the interaction of chondrocytes with the cartilage extracellular matrix through interaction with cell surface integrin receptors. Could play a role in the pathogenesis of osteoarthritis. Potent suppressor of apoptosis in both primary chondrocytes and transformed cells. Suppresses apoptosis by blocking the activation of caspase-3 and by inducing the IAP family of survival proteins (BIRC3, BIRC2, BIRC5 and XIAP). Essential for maintaining a vascular smooth muscle cells (VSMCs) contractile/differentiated phenotype under physiological and pathological stimuli. Maintains this phenotype of VSMCs by interacting with ITGA7. The polypeptide is Cartilage oligomeric matrix protein (Mus musculus (Mouse)).